A 109-amino-acid chain; its full sequence is Profilin (109 aa).

The protein belongs to the profilin family. In terms of assembly, multimer. Occurs in many kinds of cells as a complex with monomeric actin in a 1:1 ratio.

Its subcellular location is the cytoplasm. It localises to the cytoskeleton. Binds to actin and affects the structure of the cytoskeleton. At high concentrations, profilin prevents the polymerization of actin, whereas it enhances it at low concentrations. By binding to PIP2, it inhibits the formation of IP3 and DG. In Actinidia deliciosa (Kiwi), this protein is Profilin.